The following is an 867-amino-acid chain: Rifampicin phosphotransferase (867 aa).

The tract at residues 1–314 (MKPYVLKFQE…FYIVQSRPIT (314 aa)) is ATP-binding. The ATP site is built by Lys22, Arg117, Gly132, Thr136, Gln183, Glu297, Gln309, and Arg311. The tract at residues 327–754 (NRVYISVAHQ…TSDGEMINGE (428 aa)) is rifampicin-binding. Residues Gln336 and Tyr351 each contribute to the rifampicin site. The tract at residues 767–865 (GLPVSSGTVE…INGTEGYIEI (99 aa)) is swivel phosphohistidine. His825 (tele-phosphohistidine intermediate) is an active-site residue.

The protein belongs to the rifampicin phosphotransferase family.

The catalysed reaction is rifampicin + ATP + H2O = 21-phosphorifampicin + AMP + phosphate + 2 H(+). Catalyzes the phosphorylation of rifampicin, also known as rifampin (RIF), leading to its inactivation. Confers high level resistance to a variety of clinically used rifamycin antibiotics. Does not show phosphoenolpyruvate (PEP) synthase activity. This chain is Rifampicin phosphotransferase, found in Listeria monocytogenes serotype 4b (strain F2365).